A 62-amino-acid polypeptide reads, in one-letter code: Sperm protamine P1 (62 aa).

The tract at residues 1–62 (MARYRHSRSR…RYSRRGRRRY (62 aa)) is disordered.

Belongs to the protamine P1 family. In terms of tissue distribution, testis.

It localises to the nucleus. Its subcellular location is the chromosome. Its function is as follows. Protamines substitute for histones in the chromatin of sperm during the haploid phase of spermatogenesis. They compact sperm DNA into a highly condensed, stable and inactive complex. The protein is Sperm protamine P1 (PRM1) of Trichosurus vulpecula (Brush-tailed possum).